Consider the following 308-residue polypeptide: Cytochrome b (308 aa).

Helical transmembrane passes span 1–21 (FGSL…LMAM), 45–66 (WLIR…YLHI), 81–101 (WNTG…GYVL), and 146–166 (FFAL…IHLT). Residues His-51 and His-65 each coordinate heme b. Residues His-150 and His-164 each contribute to the heme b site. A ubiquinone is bound at residue His-169. 3 consecutive transmembrane segments (helical) span residues 194-214 (TKDI…AMFS), 256-276 (LGGV…PFLH), and 288-308 (LSQL…WVGS).

It belongs to the cytochrome b family. In terms of assembly, the cytochrome bc1 complex contains 11 subunits: 3 respiratory subunits (MT-CYB, CYC1 and UQCRFS1), 2 core proteins (UQCRC1 and UQCRC2) and 6 low-molecular weight proteins (UQCRH/QCR6, UQCRB/QCR7, UQCRQ/QCR8, UQCR10/QCR9, UQCR11/QCR10 and a cleavage product of UQCRFS1). This cytochrome bc1 complex then forms a dimer. Heme b is required as a cofactor.

The protein localises to the mitochondrion inner membrane. Component of the ubiquinol-cytochrome c reductase complex (complex III or cytochrome b-c1 complex) that is part of the mitochondrial respiratory chain. The b-c1 complex mediates electron transfer from ubiquinol to cytochrome c. Contributes to the generation of a proton gradient across the mitochondrial membrane that is then used for ATP synthesis. This Asthenes dorbignyi (Creamy-breasted canastero) protein is Cytochrome b (MT-CYB).